The following is a 203-amino-acid chain: Small ribosomal subunit protein uS4 (203 aa).

Residues 93 to 153 (RRFDNVVFRA…QKSQNLDAVA (61 aa)) form the S4 RNA-binding domain.

Belongs to the universal ribosomal protein uS4 family. Part of the 30S ribosomal subunit. Contacts protein S5. The interaction surface between S4 and S5 is involved in control of translational fidelity.

In terms of biological role, one of the primary rRNA binding proteins, it binds directly to 16S rRNA where it nucleates assembly of the body of the 30S subunit. Functionally, with S5 and S12 plays an important role in translational accuracy. The chain is Small ribosomal subunit protein uS4 from Chlorobium phaeobacteroides (strain BS1).